The primary structure comprises 374 residues: Nuclear hormone receptor family member nhr-57 (374 aa).

A DNA-binding region (nuclear receptor) is located at residues 7–84 (RKYCSVCHQL…VGMNPEVVQA (78 aa)). 2 consecutive NR C4-type zinc fingers follow at residues 10–30 (CSVCHQLGDGYHFGAIACKAC) and 48–67 (CRKKNECVIKMSSRDSCKSC). The NR LBD domain occupies 124–374 (QMTPTLCGVM…DKIYKIIDGQ (251 aa)).

It belongs to the nuclear hormone receptor family.

The protein resides in the nucleus. Functionally, orphan nuclear receptor. The chain is Nuclear hormone receptor family member nhr-57 (nhr-57) from Caenorhabditis elegans.